Reading from the N-terminus, the 231-residue chain is 2,3-bisphosphoglycerate-dependent phosphoglycerate mutase (231 aa).

Residues R10–N17, T23–G24, R62, E89–Y92, K100, R116–R117, and G185–N186 each bind substrate. The active-site Tele-phosphohistidine intermediate is H11. E89 (proton donor/acceptor) is an active-site residue.

This sequence belongs to the phosphoglycerate mutase family. BPG-dependent PGAM subfamily. As to quaternary structure, homodimer.

It carries out the reaction (2R)-2-phosphoglycerate = (2R)-3-phosphoglycerate. Its pathway is carbohydrate degradation; glycolysis; pyruvate from D-glyceraldehyde 3-phosphate: step 3/5. Catalyzes the interconversion of 2-phosphoglycerate and 3-phosphoglycerate. The polypeptide is 2,3-bisphosphoglycerate-dependent phosphoglycerate mutase (Buchnera aphidicola subsp. Acyrthosiphon pisum (strain 5A)).